The sequence spans 203 residues: Putative phosphoserine phosphatase 2 (203 aa).

H9 acts as the Tele-phosphohistidine intermediate in catalysis. H149 is a catalytic residue.

It belongs to the histidine phosphatase superfamily. Metal-independent phosphoserine phosphatase family. In terms of assembly, heterodimer with PspA. The PspB subunit appears to have no or considerably lower PSP activity compared with that of PspA.

The catalysed reaction is O-phospho-L-serine + H2O = L-serine + phosphate. It catalyses the reaction O-phospho-D-serine + H2O = D-serine + phosphate. It participates in amino-acid biosynthesis; L-serine biosynthesis; L-serine from 3-phospho-D-glycerate: step 3/3. Activity is not inhibited by EDTA in vitro, nor enhanced by the addition of Mg(2+). Part of a complex that catalyzes the dephosphorylation of L-phosphoserine to serine and inorganic phosphate. Is poorly or not active toward D-phosphoserine, DL-phosphothreonine, 3-phosphoglycerate, para-nitrophenylphosphate, and fructose-6-phosphate. Does not display phosphoglycerate mutase activity. This is Putative phosphoserine phosphatase 2 (pspB) from Hydrogenobacter thermophilus (strain DSM 6534 / IAM 12695 / TK-6).